The primary structure comprises 245 residues: tRNA (guanine-N(1)-)-methyltransferase (245 aa).

S-adenosyl-L-methionine is bound by residues glycine 112 and isoleucine 132 to leucine 137.

Belongs to the RNA methyltransferase TrmD family. Homodimer.

The protein localises to the cytoplasm. It catalyses the reaction guanosine(37) in tRNA + S-adenosyl-L-methionine = N(1)-methylguanosine(37) in tRNA + S-adenosyl-L-homocysteine + H(+). Functionally, specifically methylates guanosine-37 in various tRNAs. The polypeptide is tRNA (guanine-N(1)-)-methyltransferase (Geobacter sulfurreducens (strain ATCC 51573 / DSM 12127 / PCA)).